A 770-amino-acid chain; its full sequence is Probable zinc transporter protein DDB_G0291141 (770 aa).

The Cytoplasmic portion of the chain corresponds to 1-36 (MAGSLDDSIYNNGRSGGGGGGFKFSKGFNKDSISKR). The chain crosses the membrane as a helical span at residues 37 to 57 (IIMMLFFSKGIRAWSCIILLY). Residues 58–62 (FLQSS) are Extracellular-facing. The helical transmembrane segment at 63-83 (ISIISASFYMCLFSAIFSVVV) threads the bilayer. Residues 84-100 (EKPWNLLSSLRPSQIKK) are Cytoplasmic-facing. A helical transmembrane segment spans residues 101-117 (IIYHSIFNLLIIITWNS). Topologically, residues 118 to 123 (SIKFIG) are extracellular. A helical transmembrane segment spans residues 124-146 (PIGSILASDYTFSTYPLIFNSLL). Residues 147–154 (QGNFLATD) lie on the Cytoplasmic side of the membrane. A helical transmembrane segment spans residues 155–175 (MSRGSIMLMIGYFLIPLFGIS). Residues 176 to 184 (NRLDILGYT) are Extracellular-facing. A helical membrane pass occupies residues 185 to 205 (SSQVFMIGLFSLIVHNVLVLW). Topologically, residues 206–224 (KKTIVRSWNSGSSGGKNKL) are cytoplasmic. Residues 225 to 245 (SSLGSCVSTIILFVFKLFEGF) form a helical membrane-spanning segment. At 246 to 262 (SSGSSGSDSINQVSYSQ) the chain is on the extracellular side. Residues 263–283 (LFVIAIITFILYSLNQFIDDV) form a helical membrane-spanning segment. Residues 284–291 (SEKELTFN) are Cytoplasmic-facing. The chain crosses the membrane as a helical span at residues 292 to 312 (VLSKVSLTSSVIFGLLAALFI). At 313–316 (GFKD) the chain is on the extracellular side. The helical transmembrane segment at 317–337 (FFHPILILSFIFIINAIHILY) threads the bilayer. At 338-404 (SKSNDIQPMT…QIVDKPTSRR (67 aa)) the chain is on the cytoplasmic side. The chain crosses the membrane as a helical span at residues 405-425 (IFTFLVINLMFMFVEMAYGIW). Residues 426–434 (TNSLGLITD) lie on the Extracellular side of the membrane. The helical transmembrane segment at 435-455 (ACHMFFDATALFIALVAEVIS) threads the bilayer. Topologically, residues 456–469 (QWKQNDKYSYGYGR) are cytoplasmic. Residues 470–490 (FQVLSGFVNGIFLIFIAVTIL) form a helical membrane-spanning segment. The Extracellular portion of the chain corresponds to 491–507 (MESVERLLEPPEINTDK). The helical transmembrane segment at 508 to 528 (LLLVSVLGFIINLIGIFSFHG) threads the bilayer. At 529 to 592 (DHGHSHGGGG…GVFLHLLADT (64 aa)) the chain is on the cytoplasmic side. The disordered stretch occupies residues 532–566 (HSHGGGGGHSHGGGEKKEKHHGHSHGGHGDHQQVT). A helical transmembrane segment spans residues 593–613 (LGSVGVIVSSLIIQIWGYTLA). Residue Asp-614 is a topological domain, extracellular. The helical transmembrane segment at 615–635 (PICSLLISILIFLSVLPLIAN) threads the bilayer. The Cytoplasmic portion of the chain corresponds to 636-770 (TAKTLLQCTP…SSSSHHHRHN (135 aa)). A disordered region spans residues 751-770 (DIHHNHSSSSSSSSHHHRHN).

The protein belongs to the cation diffusion facilitator (CDF) transporter (TC 2.A.4) family. SLC30A subfamily.

Its subcellular location is the membrane. Its function is as follows. May be involved in zinc transport from the cytoplasm to either intracellular organelles or extracellular spaces. The polypeptide is Probable zinc transporter protein DDB_G0291141 (Dictyostelium discoideum (Social amoeba)).